Reading from the N-terminus, the 449-residue chain is Methylenetetrahydrofolate--tRNA-(uracil-5-)-methyltransferase TrmFO (449 aa).

9–14 (GGGIAG) is an FAD binding site.

It belongs to the MnmG family. TrmFO subfamily. It depends on FAD as a cofactor.

The protein resides in the cytoplasm. The catalysed reaction is uridine(54) in tRNA + (6R)-5,10-methylene-5,6,7,8-tetrahydrofolate + NADH + H(+) = 5-methyluridine(54) in tRNA + (6S)-5,6,7,8-tetrahydrofolate + NAD(+). It carries out the reaction uridine(54) in tRNA + (6R)-5,10-methylene-5,6,7,8-tetrahydrofolate + NADPH + H(+) = 5-methyluridine(54) in tRNA + (6S)-5,6,7,8-tetrahydrofolate + NADP(+). Catalyzes the folate-dependent formation of 5-methyl-uridine at position 54 (M-5-U54) in all tRNAs. The polypeptide is Methylenetetrahydrofolate--tRNA-(uracil-5-)-methyltransferase TrmFO (Gloeobacter violaceus (strain ATCC 29082 / PCC 7421)).